Reading from the N-terminus, the 1221-residue chain is MIDNILQFFLKNVPQDKTYEINNLQDANHLIIRNTRTGTRRLFEYVNNFQQFLNTIRNNFNGPCAKHDMGASCEDTEEPAEKHAAQTLDGHDWVLESNDFCIFVKPFILKKHYDIIQKYINFEDFFKSTDPGYINKCVQAGDYYYWPNWPKKQAFSFNGWQLFLNIKFGIVIEPTIPIIHNKKLGPVDLFVFDPKCFLNVELSLRTNHDPPQTLFVNGKTKFDDSHEDLFILKMADGTVATCKVNGELVNSDKNFFNYIRDDINLEECITVPKYKHIVNVNLKSLRVFENNNFDKNDVDLSDTRSRKPRIVPIISASSENADYIQTQINLGLIAIHENMVKVLATHERANDPNLLQQYFEKSKFKNFDFLIYVLWKILTKNENFSYRETDIKLFLELLCESLFACDKEALNEALKRCEPYKKQEKIVFNRACNHWFDFDDTKLCVSLGYYFGIHYMIYLTQSAKNEILDHDELWAYTYENVMALNLPPDIVCKGFFRKLENVVTGVNLVFNGKHYQIVKKEDDLFKLTKSNCYKLSNIKFNNWKYLYLTTHGVYNVFTNSFHSSCPFLLGTTLPQTFKKPTDEKYLPEDAFNYMLSTSADELSIYRTYHIAKMCRDVKMLKTNTAIVNYMGNCNTCQADMRVALNNLFRDLWNLDDENLITLALYVNKNRVSDMLHNLKCKPCRSTVSGSRPKCKCYKKIKINRKALKVCLMADMFGNDAELSELIWMLIFTNKTYVSTTLIRTNSEFVNQHGEFFSKEHNKIIQYLYRTIHKIEYVDMLMDKFNDKRLFLTELRDDVAREPDVQFEESDNISKFYTHHADALMILKKYNVWWDKIILARSTDDLPTWLTRFYMRIIMSKVDLKEYSYNYLKKIVEGYLYFKRFTNFNHANAIMLMHFAASLAIPVDYGKKAIYMPGEPGSGKSSFFELLDYLVLMHKFDDDNHSGESNKETSDKEVSKLNSQLYTINELKQCSESYFKKHADSSKSDSKSRKYQGLLKYEANYKMLIVNNKPLYVDDYDDGVQDRFLIVYTNHKFVDSVKFAGSVYEHIKSKQFPIESMYYESLVTPVRLFLSHVLMYRRDPKTGFVVYKTLLSNDPMHKHNLMCLSTNNSPLYALIYILNIKTVRSATITIGEDKMEEMIGIAVQHFKNFLHPSFVQYNYKKNINASSSKSFVFNEQVLLQQIKNKFKNNYNKTTNVFYNMTMALNRNDLNTSVPNFVC.

The Nuclear localization signal motif lies at 692–701 (PKCKCYKKIK). 917-924 (GEPGSGKS) contributes to the ATP binding site. The segment at residues 967–981 (INELKQCSESYFKKH) is a DNA-binding region (H-T-H motif).

As to quaternary structure, interacts with IE1 and LEF-3.

The protein localises to the host nucleus. The catalysed reaction is ATP + H2O = ADP + phosphate + H(+). Functionally, essential for initiation of viral DNA replication, it may contribute to other functions such as controlling the switch to the late phase and leading to the inhibition of host protein synthesis. Required for late and very late gene expression. This Lepidoptera (butterflies and moths) protein is DNA replication helicase (HELI).